A 146-amino-acid chain; its full sequence is Ribosome-binding factor A (146 aa).

Polar residues predominate over residues Q122–N134. Residues Q122–A146 are disordered. Acidic residues predominate over residues D135–A146.

Belongs to the RbfA family. Monomer. Binds 30S ribosomal subunits, but not 50S ribosomal subunits or 70S ribosomes.

It localises to the cytoplasm. One of several proteins that assist in the late maturation steps of the functional core of the 30S ribosomal subunit. Associates with free 30S ribosomal subunits (but not with 30S subunits that are part of 70S ribosomes or polysomes). Required for efficient processing of 16S rRNA. May interact with the 5'-terminal helix region of 16S rRNA. This Shewanella sp. (strain ANA-3) protein is Ribosome-binding factor A.